The primary structure comprises 381 residues: 1-deoxy-D-xylulose 5-phosphate reductoisomerase (381 aa).

Ser10, Gly11, Ser12, Ile13, Gly36, Lys37, Asn38, and Asn121 together coordinate NADPH. Lys122 lines the 1-deoxy-D-xylulose 5-phosphate pocket. NADPH is bound at residue Glu123. Asp147 provides a ligand contact to Mn(2+). 1-deoxy-D-xylulose 5-phosphate is bound by residues Ser148, Glu149, Ser173, and His196. Glu149 serves as a coordination point for Mn(2+). Gly202 provides a ligand contact to NADPH. Residues Ser209, Asn214, Lys215, and Glu218 each coordinate 1-deoxy-D-xylulose 5-phosphate. Mn(2+) is bound at residue Glu218.

This sequence belongs to the DXR family. Mg(2+) serves as cofactor. Requires Mn(2+) as cofactor.

The enzyme catalyses 2-C-methyl-D-erythritol 4-phosphate + NADP(+) = 1-deoxy-D-xylulose 5-phosphate + NADPH + H(+). Its pathway is isoprenoid biosynthesis; isopentenyl diphosphate biosynthesis via DXP pathway; isopentenyl diphosphate from 1-deoxy-D-xylulose 5-phosphate: step 1/6. Its function is as follows. Catalyzes the NADPH-dependent rearrangement and reduction of 1-deoxy-D-xylulose-5-phosphate (DXP) to 2-C-methyl-D-erythritol 4-phosphate (MEP). The chain is 1-deoxy-D-xylulose 5-phosphate reductoisomerase from Geobacillus sp. (strain WCH70).